The following is a 265-amino-acid chain: ATP synthase subunit a (265 aa).

5 helical membrane-spanning segments follow: residues 25–45 (FWAV…LFLW), 88–108 (IAPL…MDLI), 142–162 (DLNT…IYSI), 207–227 (LFGN…IGFW), and 233–253 (FAWA…FMML).

Belongs to the ATPase A chain family. As to quaternary structure, F-type ATPases have 2 components, CF(1) - the catalytic core - and CF(0) - the membrane proton channel. CF(1) has five subunits: alpha(3), beta(3), gamma(1), delta(1), epsilon(1). CF(0) has three main subunits: a(1), b(2) and c(9-12). The alpha and beta chains form an alternating ring which encloses part of the gamma chain. CF(1) is attached to CF(0) by a central stalk formed by the gamma and epsilon chains, while a peripheral stalk is formed by the delta and b chains.

It localises to the cell inner membrane. Key component of the proton channel; it plays a direct role in the translocation of protons across the membrane. The sequence is that of ATP synthase subunit a from Idiomarina loihiensis (strain ATCC BAA-735 / DSM 15497 / L2-TR).